Reading from the N-terminus, the 341-residue chain is D-aspartate oxidase (341 aa).

M1 bears the Blocked amino end (Met) mark. 7 residues coordinate FAD: D36, K37, T43, S44, M50, G307, and I311. Positions S339–L341 match the Microbody targeting signal motif.

This sequence belongs to the DAMOX/DASOX family. In terms of assembly, monomer. Interacts with PEX5; the interaction is direct and required for localization of DDO to the peroxisome. FAD serves as cofactor. In the kidney, expressed in epithelial cells of the proximal tubules and in the liver (at protein level).

Its subcellular location is the peroxisome matrix. The protein resides in the cytoplasm. It is found in the cytosol. It carries out the reaction D-aspartate + O2 + H2O = oxaloacetate + H2O2 + NH4(+). The enzyme catalyses D-glutamate + O2 + H2O = H2O2 + 2-oxoglutarate + NH4(+). Its activity is regulated as follows. Inhibited by phenylglyoxal; chemical modification of arginine residues in the enzyme with phenylglyoxal leads to the irreversible loss of activity towards dicarboxylic D-amino acids, paralleled by a transient appearance of activity versus monocarboxylic ones. Its function is as follows. Selectively catalyzes the oxidative deamination of acidic amino acids. Suppresses the level of D-aspartate in the brain, an amino acid that can act as an agonist for glutamate receptors. Protects the organism from the toxicity of D-amino acids. May also function in the intestine. In Bos taurus (Bovine), this protein is D-aspartate oxidase (DDO).